Reading from the N-terminus, the 104-residue chain is Large ribosomal subunit protein uL24 (104 aa).

The protein belongs to the universal ribosomal protein uL24 family. Part of the 50S ribosomal subunit.

Its function is as follows. One of two assembly initiator proteins, it binds directly to the 5'-end of the 23S rRNA, where it nucleates assembly of the 50S subunit. Functionally, one of the proteins that surrounds the polypeptide exit tunnel on the outside of the subunit. The chain is Large ribosomal subunit protein uL24 from Neorickettsia sennetsu (strain ATCC VR-367 / Miyayama) (Ehrlichia sennetsu).